A 166-amino-acid polypeptide reads, in one-letter code: Small ribosomal subunit protein uS5 (166 aa).

The S5 DRBM domain occupies 11-74; that stretch reads LQEKLVAVNR…EQARRNMVKV (64 aa).

It belongs to the universal ribosomal protein uS5 family. In terms of assembly, part of the 30S ribosomal subunit. Contacts proteins S4 and S8.

Functionally, with S4 and S12 plays an important role in translational accuracy. In terms of biological role, located at the back of the 30S subunit body where it stabilizes the conformation of the head with respect to the body. The protein is Small ribosomal subunit protein uS5 of Tolumonas auensis (strain DSM 9187 / NBRC 110442 / TA 4).